The chain runs to 208 residues: Large ribosomal subunit protein uL3 (208 aa).

The residue at position 149 (Q149) is an N5-methylglutamine.

This sequence belongs to the universal ribosomal protein uL3 family. Part of the 50S ribosomal subunit. Forms a cluster with proteins L14 and L19. Post-translationally, methylated by PrmB.

Functionally, one of the primary rRNA binding proteins, it binds directly near the 3'-end of the 23S rRNA, where it nucleates assembly of the 50S subunit. In Actinobacillus succinogenes (strain ATCC 55618 / DSM 22257 / CCUG 43843 / 130Z), this protein is Large ribosomal subunit protein uL3.